The primary structure comprises 142 residues: Large ribosomal subunit protein uL13 (142 aa).

Belongs to the universal ribosomal protein uL13 family. In terms of assembly, part of the 50S ribosomal subunit.

Its function is as follows. This protein is one of the early assembly proteins of the 50S ribosomal subunit, although it is not seen to bind rRNA by itself. It is important during the early stages of 50S assembly. This chain is Large ribosomal subunit protein uL13, found in Psychrobacter cryohalolentis (strain ATCC BAA-1226 / DSM 17306 / VKM B-2378 / K5).